The following is a 98-amino-acid chain: DNA-binding protein HU (98 aa).

This sequence belongs to the bacterial histone-like protein family. As to quaternary structure, homodimer.

Histone-like DNA-binding protein which is capable of wrapping DNA to stabilize it, and thus to prevent its denaturation under extreme environmental conditions. In Campylobacter jejuni subsp. jejuni serotype O:2 (strain ATCC 700819 / NCTC 11168), this protein is DNA-binding protein HU (hup).